Consider the following 153-residue polypeptide: UPAR/Ly6 domain-containing protein cold (153 aa).

The N-terminal stretch at 1–25 is a signal peptide; sequence MKSWEIAVVLVAAVYLCSQVNFVAG. The Extracellular portion of the chain corresponds to 26 to 130; it reads LECYVCSNQT…FVISGAPSRQ (105 aa). Cystine bridges form between cysteine 28–cysteine 55, cysteine 31–cysteine 41, cysteine 48–cysteine 81, cysteine 87–cysteine 112, cysteine 99–cysteine 109, and cysteine 113–cysteine 118. N-linked (GlcNAc...) asparagine glycosylation occurs at asparagine 33. Serine 124 carries GPI-anchor amidated serine lipidation. Positions 125 to 153 are cleaved as a propeptide — removed in mature form; the sequence is GAPSRQGYGVCLTLLTALLGLGSWLIPRS. A helical transmembrane segment spans residues 131–151; that stretch reads GYGVCLTLLTALLGLGSWLIP. At 152 to 153 the chain is on the cytoplasmic side; sequence RS.

This sequence belongs to the snake toxin-like superfamily. Post-translationally, GPI-anchored. Expressed in all tissues that form septate junctions, including hindgut, trachea, epidermis and dorsal pouch. Expressed in subperineurial glial cells that form the hemolymph-brain barrier of the central nervous system.

It localises to the endosome membrane. The protein localises to the endoplasmic reticulum membrane. Its subcellular location is the cell membrane. It is found in the cell junction. The protein resides in the septate junction. Required for septate junction assembly, possibly by organizing the preassembly and transport of septate junction proteins such as dlg1/disks large 1 and Nrx-IV/Neurexin-IV. Involved in paracellular barrier functions of trachea, hindgut and salivary gland mediated by epithelial cell septate junctions. Involved in paracellular barrier functions of the hemolymph-brain barrier (insect blood-brain barrier) mediated by glial cell septate junctions. Required for maintenance of septate junctions in imaginal disk epithelial cells. Involved in the epithelial cell wound-healing response. Directly or indirectly mediates cell-cell adhesion during septate junction formation. This is UPAR/Ly6 domain-containing protein cold from Drosophila melanogaster (Fruit fly).